The primary structure comprises 35 residues: Photosystem II reaction center protein T (35 aa).

The chain crosses the membrane as a helical span at residues 3 to 23 (ALVYTFLLVSTLGIIFFAIFF).

Belongs to the PsbT family. PSII is composed of 1 copy each of membrane proteins PsbA, PsbB, PsbC, PsbD, PsbE, PsbF, PsbH, PsbI, PsbJ, PsbK, PsbL, PsbM, PsbT, PsbY, PsbZ, Psb30/Ycf12, at least 3 peripheral proteins of the oxygen-evolving complex and a large number of cofactors. It forms dimeric complexes.

The protein localises to the plastid. Its subcellular location is the chloroplast thylakoid membrane. Found at the monomer-monomer interface of the photosystem II (PS II) dimer, plays a role in assembly and dimerization of PSII. PSII is a light-driven water plastoquinone oxidoreductase, using light energy to abstract electrons from H(2)O, generating a proton gradient subsequently used for ATP formation. This is Photosystem II reaction center protein T from Taxus brevifolia (Pacific yew).